Consider the following 220-residue polypeptide: Charged multivesicular body protein 4b (220 aa).

Disordered stretches follow at residues 1–22 and 180–220; these read MSLF…SPQE and EIGD…WAAN. Coiled-coil stretches lie at residues 21-88 and 123-181; these read QEAI…STIE and IDKV…LLEI.

This sequence belongs to the SNF7 family. In terms of assembly, probable core component of the endosomal sorting required for transport complex III (ESCRT-III). ESCRT-III components are thought to multimerize to form a flat lattice on the perimeter membrane of the endosome.

It localises to the cytoplasm. The protein localises to the cytosol. Its subcellular location is the late endosome membrane. It is found in the midbody. In terms of biological role, probable core component of the endosomal sorting required for transport complex III (ESCRT-III) which is involved in multivesicular bodies (MVBs) formation and sorting of endosomal cargo proteins into MVBs. MVBs contain intraluminal vesicles (ILVs) that are generated by invagination and scission from the limiting membrane of the endosome and mostly are delivered to lysosomes enabling degradation of membrane proteins, such as stimulated growth factor receptors, lysosomal enzymes and lipids. The polypeptide is Charged multivesicular body protein 4b (chmp4b) (Danio rerio (Zebrafish)).